The chain runs to 282 residues: NADPH-dependent 7-cyano-7-deazaguanine reductase (282 aa).

Position 88 to 90 (88 to 90) interacts with substrate; the sequence is IES. Residue 90 to 91 participates in NADPH binding; the sequence is SK. Residue C190 is the Thioimide intermediate of the active site. The active-site Proton donor is D197. 229–230 is a binding site for substrate; the sequence is HE. 258 to 259 is an NADPH binding site; the sequence is RG.

Belongs to the GTP cyclohydrolase I family. QueF type 2 subfamily. In terms of assembly, homodimer.

The protein resides in the cytoplasm. It carries out the reaction 7-aminomethyl-7-carbaguanine + 2 NADP(+) = 7-cyano-7-deazaguanine + 2 NADPH + 3 H(+). The protein operates within tRNA modification; tRNA-queuosine biosynthesis. Its function is as follows. Catalyzes the NADPH-dependent reduction of 7-cyano-7-deazaguanine (preQ0) to 7-aminomethyl-7-deazaguanine (preQ1). The protein is NADPH-dependent 7-cyano-7-deazaguanine reductase of Pectobacterium carotovorum subsp. carotovorum (strain PC1).